Consider the following 271-residue polypeptide: Mannosyl-3-phosphoglycerate phosphatase (271 aa).

Catalysis depends on aspartate 13, which acts as the Nucleophile. The Mg(2+) site is built by aspartate 13, aspartate 15, and aspartate 214.

This sequence belongs to the HAD-like hydrolase superfamily. MPGP family. Mg(2+) serves as cofactor.

It localises to the cytoplasm. It catalyses the reaction 2-O-(alpha-D-mannosyl)-3-phosphoglycerate + H2O = (2R)-2-O-(alpha-D-mannosyl)-glycerate + phosphate. The polypeptide is Mannosyl-3-phosphoglycerate phosphatase (Escherichia coli O139:H28 (strain E24377A / ETEC)).